The sequence spans 91 residues: UPF0386 protein Caul_4643 (91 aa).

The protein belongs to the UPF0386 family.

The protein is UPF0386 protein Caul_4643 of Caulobacter sp. (strain K31).